We begin with the raw amino-acid sequence, 56 residues long: 4Fe-4S ferredoxin FdxA (56 aa).

2 consecutive 4Fe-4S ferredoxin-type domains span residues 1 to 28 and 29 to 56; these read MAYV…SSGD and DRYV…PVQA. Cysteine 9, cysteine 12, cysteine 15, cysteine 19, cysteine 38, cysteine 41, cysteine 44, and cysteine 48 together coordinate [4Fe-4S] cluster.

[4Fe-4S] cluster serves as cofactor.

Its function is as follows. Ferredoxins are iron-sulfur proteins that transfer electrons in a wide variety of metabolic reactions. This Gottschalkia acidurici (strain ATCC 7906 / DSM 604 / BCRC 14475 / CIP 104303 / KCTC 5404 / NCIMB 10678 / 9a) (Clostridium acidurici) protein is 4Fe-4S ferredoxin FdxA.